The following is a 376-amino-acid chain: TraB domain-containing protein (376 aa).

Residue M1 is modified to N-acetylmethionine. The segment at M1–P34 is disordered. Positions V14 to P27 are enriched in low complexity. At T65 the chain carries Phosphothreonine.

In Homo sapiens (Human), this protein is TraB domain-containing protein (TRABD).